Consider the following 578-residue polypeptide: MCGRRLLFLAAFGCLLANAFSLPATRNEEFDDGFPESEFDYEERHTREIPAQAYAPPIVYNSQSSYSPAKDQGYSAPAAPVYSPAAPSYSAPAAPSYSAPAAPSYSAPAAPSYSAPAAPSYSAPAAPSYSAPASSSYSAPAAPSYSAPAAPSYSAPAAPSYSAPASSSYSAPAAPSYSAPAAPSYSAPAAPSYSAPAAPSYSAPAAPSYSAPAAPSYSAPSAPSYSAQKTSSYSAPAAPSYHAPAAPASSYSAPAGPSYSAPAAPSYSAPSYSAPASSYSALKAPSYSAPAAPSYSAPAAPSYSSSASPSYSSPASSSYSAPAAPTYSAPKAQSYSAPAAPSYSAPAAPSYSAPASSSYSAPAAPSYSAPAAPSYSAPAAPSYSAPASSSYSAPAAPSYSAPAAPSYSAPASSSYSAPAAPSYSAPAAPSYSAPAAPSYSAPAAPSYSAPASSGYSAARAYSAGSAAPASGYSAPKTSSGYSAPASSGSPAASSYSAPASSTASSGYSAPASKSSGYARSEMDHQILGMARTAGGYGSAAPSAAYGAASLPSPPCPKNYVFSCSSVFTPAPCSQGYGY.

Residues 1-21 (MCGRRLLFLAAFGCLLANAFS) form the signal peptide. Positions 72 to 452 (QGYSAPAAPV…AAPSYSAPAS (381 aa)) are 45 X 8 AA approximate tandem repeats of [PS]-[AS]-Y-S-A-P-A-[AS]. Disordered stretches follow at residues 133-442 (ASSS…YSAP) and 487-514 (SGSP…ASKS). The region spanning 549-578 (SLPSPPCPKNYVFSCSSVFTPAPCSQGYGY) is the VM domain.

As to quaternary structure, interacts with Vm26Aa and Vm26Ab; forms part of a disulfide-linked network within the vitelline membrane of stage 10 egg chambers. Becomes part of a disulfide-linked network including other vitelline membrane proteins, including Vm26Aa and Vm26Ab, during vitelline membrane biogenesis and maturation. In terms of processing, sulfated by pip; probably involved in embryo dorsal-ventral axis determination. Sulfation by pip may occur on covalently bound glycosaminoglycans. Secreted into the perivitelline space and becomes stably incorporated into the vitelline membrane (at protein level). Expressed throughout the follicle cell layer of stage 10 egg chambers.

The protein resides in the secreted. It is found in the extracellular space. Its subcellular location is the extracellular matrix. Its function is as follows. Major early eggshell protein secreted by folicle cells into the perivitelline space and incorporated into the vitelline membrane. Localized sulfation by pip may be involved in embryo dorsal-ventral axis determination. The chain is Vitelline membrane-like protein from Drosophila melanogaster (Fruit fly).